The primary structure comprises 400 residues: Enoyl-[acyl-carrier-protein] reductase [NADH] 2 (400 aa).

NAD(+) contacts are provided by residues 48 to 53 (GASSGF), 75 to 76 (FE), 112 to 113 (DA), and 141 to 142 (LA). Tyr-227 contacts substrate. The active-site Proton donor is Tyr-237. Residues Lys-246 and 275–277 (LVT) each bind NAD(+).

The protein belongs to the TER reductase family. Monomer.

The catalysed reaction is a 2,3-saturated acyl-[ACP] + NAD(+) = a (2E)-enoyl-[ACP] + NADH + H(+). The protein operates within lipid metabolism; fatty acid biosynthesis. In terms of biological role, involved in the final reduction of the elongation cycle of fatty acid synthesis (FAS II). Catalyzes the reduction of a carbon-carbon double bond in an enoyl moiety that is covalently linked to an acyl carrier protein (ACP). In Photobacterium profundum (strain SS9), this protein is Enoyl-[acyl-carrier-protein] reductase [NADH] 2.